The sequence spans 655 residues: MARKQQFDYNEDAIQVLEGLEAVRKRPGMYIGSTDARGLHHLVYEIVDNSVDEVLAGHGDHIIVKIHKDNSISVQDRGRGMPTGMHKLGKPTPEVILTVLHAGGKFGQGGYKTSGGLHGVGASVVNALSEWLTVTIERDGFVYQQRFENGGKPVTSLEKIGKTKKTGTLTHFKPDPTMFSTTTYNFETLSERLRESAFLLKGLKIELIDERNDQREVFYYENGIEAFVAYLNEEKDVLSEVVSFEGEHHSIEVDFAFQFNDGYSENILSFVNNVRTKDGGTHESGAKTAMTRAFNEYARKVALLKEKDKNLEGTDIREGLSAIISVRIPEELLQFEGQTKGKLGTSEARSAVDAIVSEQLAYFLEENRDTATLLVKKAIKASQAREAARKAREEARSGKKRKKSEATLSGKLTPAGSRNPAKNELYLVEGDSAGGSAKQGRDRRFQAVLPLRGKVINTEKAKLADIFKNEEINTIIHAIGGGVGADFSIDDINYDKIIIMTDADTDGAHIQVLLLTFFYRYMKPLIEHGKVFIALPPLYKVSKGSGKKEIIEYAWSDEEMGDVLKKVGKGYTIQRYKGLGEMNADQLWETTMNPESRTLVRVKIDDAARVERRVTTLMGDKVEPRRKWIEKNVAFGLDEESNILENENLSVAEEV.

ATP-binding positions include Tyr-9, Asn-49, Asp-76, 116–122 (GLHGVGA), and Lys-340. Residues 387–397 (AARKAREEARS) are compositionally biased toward basic and acidic residues. The tract at residues 387–419 (AARKAREEARSGKKRKKSEATLSGKLTPAGSRN) is disordered. The region spanning 423–537 (NELYLVEGDS…HGKVFIALPP (115 aa)) is the Toprim domain. Positions 429, 502, and 504 each coordinate Mg(2+).

The protein belongs to the type II topoisomerase family. ParE type 2 subfamily. Heterotetramer composed of ParC and ParE. It depends on Mg(2+) as a cofactor. Requires Mn(2+) as cofactor. Ca(2+) serves as cofactor.

It carries out the reaction ATP-dependent breakage, passage and rejoining of double-stranded DNA.. Its function is as follows. Topoisomerase IV is essential for chromosome segregation. It relaxes supercoiled DNA. Performs the decatenation events required during the replication of a circular DNA molecule. This is DNA topoisomerase 4 subunit B from Bacillus subtilis (strain 168).